The primary structure comprises 496 residues: Lysine--tRNA ligase (496 aa).

Positions 409 and 416 each coordinate Mg(2+).

It belongs to the class-II aminoacyl-tRNA synthetase family. As to quaternary structure, homodimer. The cofactor is Mg(2+).

It is found in the cytoplasm. The catalysed reaction is tRNA(Lys) + L-lysine + ATP = L-lysyl-tRNA(Lys) + AMP + diphosphate. The chain is Lysine--tRNA ligase from Streptococcus thermophilus (strain ATCC BAA-491 / LMD-9).